We begin with the raw amino-acid sequence, 142 residues long: uncharacterized protein (142 aa).

Helical transmembrane passes span 3–23, 30–50, and 91–111; these read LIFI…FNLL, SVSW…AVWI, and FFLL…AYFS.

It localises to the membrane. This is an uncharacterized protein from Saccharomyces cerevisiae (strain ATCC 204508 / S288c) (Baker's yeast).